We begin with the raw amino-acid sequence, 336 residues long: Fructose-1,6-bisphosphatase class 1 (336 aa).

Mg(2+) contacts are provided by Glu92, Asp115, Leu117, and Asp118. Substrate-binding positions include 118–121 (DGSS), Asn211, Tyr244, 262–264 (YLY), and Lys274. Glu280 lines the Mg(2+) pocket.

This sequence belongs to the FBPase class 1 family. Homotetramer. Requires Mg(2+) as cofactor.

The protein resides in the cytoplasm. The enzyme catalyses beta-D-fructose 1,6-bisphosphate + H2O = beta-D-fructose 6-phosphate + phosphate. Its pathway is carbohydrate biosynthesis; gluconeogenesis. The sequence is that of Fructose-1,6-bisphosphatase class 1 from Vibrio cholerae serotype O1 (strain ATCC 39315 / El Tor Inaba N16961).